Here is a 240-residue protein sequence, read N- to C-terminus: 3-dehydroquinate dehydratase (240 aa).

Residues Ser-15, 42 to 44 (EWR), and Arg-73 each bind 3-dehydroquinate. His-132 functions as the Proton donor/acceptor in the catalytic mechanism. Lys-160 serves as the catalytic Schiff-base intermediate with substrate. Residues Arg-202, Ser-221, and Gln-225 each coordinate 3-dehydroquinate.

It belongs to the type-I 3-dehydroquinase family. Homodimer.

The enzyme catalyses 3-dehydroquinate = 3-dehydroshikimate + H2O. Its pathway is metabolic intermediate biosynthesis; chorismate biosynthesis; chorismate from D-erythrose 4-phosphate and phosphoenolpyruvate: step 3/7. Involved in the third step of the chorismate pathway, which leads to the biosynthesis of aromatic amino acids. Catalyzes the cis-dehydration of 3-dehydroquinate (DHQ) and introduces the first double bond of the aromatic ring to yield 3-dehydroshikimate. In Latilactobacillus sakei subsp. sakei (strain 23K) (Lactobacillus sakei subsp. sakei), this protein is 3-dehydroquinate dehydratase.